Reading from the N-terminus, the 141-residue chain is Arsenate reductase (141 aa).

The Nucleophile; cysteine thioarsenate intermediate role is filled by C12.

It belongs to the ArsC family.

It catalyses the reaction [glutaredoxin]-dithiol + arsenate + glutathione + H(+) = glutathionyl-S-S-[glutaredoxin] + arsenite + H2O. In terms of biological role, involved in resistance to arsenate. Catalyzes the reduction of arsenate [As(V)] to arsenite [As(III)]. The polypeptide is Arsenate reductase (Escherichia coli (strain K12)).